The primary structure comprises 178 residues: Cytochrome b6-f complex iron-sulfur subunit (178 aa).

A helical transmembrane segment spans residues 20 to 42 (LLTFGSVTGVALGSLYPVVKYFI). The region spanning 68 to 161 (WLANHSDGDR…IAVENDNVFV (94 aa)) is the Rieske domain. Residues C107, H109, C125, and H128 each coordinate [2Fe-2S] cluster. The cysteines at positions 112 and 127 are disulfide-linked.

The protein belongs to the Rieske iron-sulfur protein family. As to quaternary structure, the 4 large subunits of the cytochrome b6-f complex are cytochrome b6, subunit IV (17 kDa polypeptide, PetD), cytochrome f and the Rieske protein, while the 4 small subunits are PetG, PetL, PetM and PetN. The complex functions as a dimer. The cofactor is [2Fe-2S] cluster.

The protein localises to the cellular thylakoid membrane. It carries out the reaction 2 oxidized [plastocyanin] + a plastoquinol + 2 H(+)(in) = 2 reduced [plastocyanin] + a plastoquinone + 4 H(+)(out). Its function is as follows. Component of the cytochrome b6-f complex, which mediates electron transfer between photosystem II (PSII) and photosystem I (PSI), cyclic electron flow around PSI, and state transitions. This is Cytochrome b6-f complex iron-sulfur subunit from Prochlorococcus marinus (strain MIT 9303).